Consider the following 850-residue polypeptide: Mitochondrial escape protein 2 (850 aa).

The N-terminal 44 residues, 1–44, are a transit peptide targeting the mitochondrion; the sequence is MLLVRTTSLNVSRMPVPCLARGIGILKGKYRLANLMNAQPSVRH. The tract at residues 44-66 is disordered; the sequence is HVSSEIQQKDQQAGESNTATDTG. The Mitochondrial matrix portion of the chain corresponds to 45–287; the sequence is VSSEIQQKDQ…VSNFFTNHTR (243 aa). Polar residues predominate over residues 47–64; that stretch reads SEIQQKDQQAGESNTATD. Positions 198–272 constitute an RRM domain; the sequence is TTIVIKFQGP…TVLHIQYENI (75 aa). The helical transmembrane segment at 288–308 threads the bilayer; that stretch reads IAIPVLFALLSIFAVLVFDPI. Over 309–850 the chain is Mitochondrial intermembrane; the sequence is REFSIEQKIT…CEEEIKNLSK (542 aa). Basic and acidic residues predominate over residues 607–621; sequence KGENVKEPESEKEIA. The interval 607–633 is disordered; it reads KGENVKEPESEKEIAENNDSDSEADTS.

This sequence belongs to the YME2 family.

It localises to the mitochondrion inner membrane. In terms of biological role, plays a role in maintaining the mitochondrial genome and in controlling the mtDNA escape. Involved in the regulation of mtDNA nucleotide structure and number. May have a dispensable role in early maturation of pre-rRNA. The chain is Mitochondrial escape protein 2 (YME2) from Saccharomyces cerevisiae (strain YJM789) (Baker's yeast).